A 198-amino-acid chain; its full sequence is MTQQYIVEPKKGLGLKLKKGQILKVVDVEGQQVADFVAYHAKDFYEHLDQGATIDANHSIHVKVNDHLYSNLYKPMLTLIEDTVGKHDLLLPACRPDMNRLLYGKQKDEFQDTCYDNMNRALEQFGVPKPHMHYPFAIFMNTVLDEKGNLSVETPLSNAGDYVRLRAEMDLIVAFSSCPIEKGKCNGDSVTSIRVEVS.

This is an uncharacterized protein from Bacillus subtilis (strain 168).